A 316-amino-acid chain; its full sequence is Beta-agarase (316 aa).

The signal sequence occupies residues 1-18; the sequence is MKRKLFTICLASLQFACA. The region spanning 27 to 315 is the GH16 domain; sequence YEWDIYPVPA…WIRVYTLVPE (289 aa). Substrate contacts are provided by residues tryptophan 78, 87-97, and 101-103; these read QRDHVSVSDGF and RAS. Residue glutamate 167 is the Nucleophile of the active site. Catalysis depends on glutamate 172, which acts as the Proton donor. Residue arginine 197 coordinates substrate.

The protein belongs to the glycosyl hydrolase 16 family.

The enzyme catalyses Hydrolysis of (1-&gt;4)-beta-D-galactosidic linkages in agarose, giving the tetramer as the predominant product.. Functionally, cleaves the beta-1,4-linkages between beta-D-galactose and alpha-L-3,6-anhydro-galactose residues in agarose. Cleaves agarose in a random manner with retention of the anomeric-bond configuration, producing beta-anomers that give rise progressively to alpha-anomers when mutarotation takes place. The sequence is that of Beta-agarase from Phocaeicola plebeius (strain DSM 17135 / JCM 12973 / CCUG 54634 / M2) (Bacteroides plebeius).